The sequence spans 116 residues: Outer membrane protein assembly factor BamE (116 aa).

A signal peptide spans 1-22 (MITMRCKMLTAAAVMLAMLTAG). Residue Cys23 is the site of N-palmitoyl cysteine attachment. Cys23 is lipidated: S-diacylglycerol cysteine.

Belongs to the BamE family. In terms of assembly, part of the Bam complex, which is composed of the outer membrane protein BamA, and four lipoproteins BamB, BamC, BamD and BamE.

The protein resides in the cell outer membrane. In terms of biological role, part of the outer membrane protein assembly complex, which is involved in assembly and insertion of beta-barrel proteins into the outer membrane. This chain is Outer membrane protein assembly factor BamE, found in Yersinia pestis.